A 282-amino-acid polypeptide reads, in one-letter code: ADP-ribosyl cyclase/cyclic ADP-ribose hydrolase (282 aa).

The first 24 residues, 1 to 24 (MSPVAIIACVCLAVTLTSISPSEA), serve as a signal peptide directing secretion. Intrachain disulfides connect Cys39-Cys58, Cys75-Cys155, Cys136-Cys149, Cys230-Cys251, and Cys263-Cys272.

It belongs to the ADP-ribosyl cyclase family. Has different isoforms which may be the result of different amounts of phosphorylation. As to expression, immature occoyctes. Oocytes.

It localises to the cytoplasmic vesicle. It catalyses the reaction NAD(+) = cyclic ADP-beta-D-ribose + nicotinamide + H(+). The catalysed reaction is nicotinate + NADP(+) = nicotinate-adenine dinucleotide phosphate + nicotinamide. The enzyme catalyses 2'-phospho-cyclic ADP-ribose + nicotinate = nicotinate-adenine dinucleotide phosphate. With respect to regulation, activity is presumably regulated by its sequestration in vesicles before egg fertilization. After fertilization and upon NADase release, it could then be regulated via its potential phosphorylation sites. Its function is as follows. Synthesizes cyclic ADP-ribose (cADPR), a second messenger for calcium mobilization from endoplasmic reticulum; ADP-ribose is a minor product. Synthesizes the Ca(2+) mobilizer nicotinate-adenine dinucleotide phosphate from 2'-phospho-cADPR and nicotinic acid as well as from NADP(+) and nicotinic acid; with NADP(+) as substrate preferentially catalyzes NADP(+) hydrolysis rather than NAADP(+) synthesis, about 70-fold better at pH 7.4. Has cADPR hydrolase activity at very high enzyme concentrations, which is probably not physiological. The conversion of NAD(+) into ADP-ribose is also only observed at high enzyme concentrations and results from the hydrolysis of cADP-ribose. This chain is ADP-ribosyl cyclase/cyclic ADP-ribose hydrolase, found in Aplysia californica (California sea hare).